A 278-amino-acid polypeptide reads, in one-letter code: Formamidopyrimidine-DNA glycosylase (278 aa).

Residue P2 is the Schiff-base intermediate with DNA of the active site. E3 (proton donor) is an active-site residue. K58 functions as the Proton donor; for beta-elimination activity in the catalytic mechanism. 2 residues coordinate DNA: H92 and R111. An FPG-type zinc finger spans residues 239-273 (HVYGKKGVPCERCGTPIEKIKVAQRGTHFCPKCQI). R263 (proton donor; for delta-elimination activity) is an active-site residue.

Belongs to the FPG family. Monomer. Zn(2+) is required as a cofactor.

The enzyme catalyses Hydrolysis of DNA containing ring-opened 7-methylguanine residues, releasing 2,6-diamino-4-hydroxy-5-(N-methyl)formamidopyrimidine.. It catalyses the reaction 2'-deoxyribonucleotide-(2'-deoxyribose 5'-phosphate)-2'-deoxyribonucleotide-DNA = a 3'-end 2'-deoxyribonucleotide-(2,3-dehydro-2,3-deoxyribose 5'-phosphate)-DNA + a 5'-end 5'-phospho-2'-deoxyribonucleoside-DNA + H(+). In terms of biological role, involved in base excision repair of DNA damaged by oxidation or by mutagenic agents. Acts as a DNA glycosylase that recognizes and removes damaged bases. Has a preference for oxidized purines, such as 7,8-dihydro-8-oxoguanine (8-oxoG). Has AP (apurinic/apyrimidinic) lyase activity and introduces nicks in the DNA strand. Cleaves the DNA backbone by beta-delta elimination to generate a single-strand break at the site of the removed base with both 3'- and 5'-phosphates. This is Formamidopyrimidine-DNA glycosylase from Latilactobacillus sakei subsp. sakei (strain 23K) (Lactobacillus sakei subsp. sakei).